A 270-amino-acid polypeptide reads, in one-letter code: MDLFNAAILALIQGITEFLPISSSGHLILTPYLLGWQDQGLVFDIAANSGSLAAVMLYFRREVGQMLRGGWRLLCAPRAWRQANAESHLVLQLALATIPVGLVGLACKDWVATVARDPMIIATTSILFGLLLWWADRQGRCNNDGSALSWRQVGIIGIAQAFALIPGTSRSGVTMTAGLMLGLTREAAARFSFLMAIPVGILAALLDLKDLFAHPMQGDELYFLGVGFCVSGLSAYMVIHGLLAWLKRQTMTPFVVYRVVLGVVIFATLG.

The next 8 membrane-spanning stretches (helical) occupy residues 1–21, 39–59, 87–107, 114–134, 147–167, 193–213, 223–243, and 250–270; these read MDLF…FLPI, QGLV…MLYF, SHLV…GLAC, VARD…LLWW, ALSW…LIPG, FLMA…DLFA, FLGV…HGLL, and TMTP…ATLG.

It belongs to the UppP family.

The protein resides in the cell inner membrane. It catalyses the reaction di-trans,octa-cis-undecaprenyl diphosphate + H2O = di-trans,octa-cis-undecaprenyl phosphate + phosphate + H(+). Its function is as follows. Catalyzes the dephosphorylation of undecaprenyl diphosphate (UPP). Confers resistance to bacitracin. In Magnetococcus marinus (strain ATCC BAA-1437 / JCM 17883 / MC-1), this protein is Undecaprenyl-diphosphatase.